We begin with the raw amino-acid sequence, 208 residues long: Small ribosomal subunit protein uS4 (208 aa).

In terms of domain architecture, S4 RNA-binding spans 98 to 161 (RRLDNVVYRL…RKSKRFKEVF (64 aa)).

This sequence belongs to the universal ribosomal protein uS4 family. Part of the 30S ribosomal subunit. Contacts protein S5. The interaction surface between S4 and S5 is involved in control of translational fidelity.

Its function is as follows. One of the primary rRNA binding proteins, it binds directly to 16S rRNA where it nucleates assembly of the body of the 30S subunit. With S5 and S12 plays an important role in translational accuracy. This is Small ribosomal subunit protein uS4 from Halothermothrix orenii (strain H 168 / OCM 544 / DSM 9562).